A 71-amino-acid chain; its full sequence is Frenatin 2.3S (71 aa).

A signal peptide spans 1–22 (MAFLKKSLFLVLFLGLVSLSMG). Residues 21 to 56 (MGEREKREEEEEEEEENKEEEANEEGKGESEEKRGL) form a disordered region. Residues 23 to 54 (EREKREEEEEEEEENKEEEANEEGKGESEEKR) constitute a propeptide that is removed on maturation. Over residues 28–43 (EEEEEEEEENKEEEAN) the composition is skewed to acidic residues. A compositionally biased stretch (basic and acidic residues) spans 44–55 (EEGKGESEEKRG). G70 bears the Glycine amide; in Frenatin 2.1S mark.

It belongs to the frog skin active peptide (FSAP) family. Frenatin subfamily. In terms of processing, frenatin 2.3S is not amidated. Expressed by the skin glands.

The protein resides in the secreted. Antimicrobial peptide with potent activity against Gram-negative bacteria. Shows immunostimulatory actions both in vitro and in vivo. In vitro, is cytotoxic to non-small cell lung adenocarcinoma A549 cells. Also, stimulates production of pro-inflammatory cytokines by mouse peritoneal macrophages and down-regulates production of the anti-inflammatory cytokine IL-10 by lipopolysaccharide (LPS)-stimulated cells. In vivo, intraperitoneal injection in mice enhances the activation state and homing capacity of Th1 type lymphocytes and promotes the recruitment, activation and tumoricidal capacities of peritoneal NK cells. Has a very weak activity in stimulation of insulin release and a weak hemolytic activity. In terms of biological role, antimicrobial peptide with potent activity against some Gram-positive and Gram-negative bacteria. Has a multifunctional mode of action. It displays depolarization and bacterial cell leakage, and can also internalize into bacterial cells and alter specific gene expression involved in bacterial resistance mechanisms. Does not agglutinate bacteria and lipid vesicles, even a high concentrations. Also displays moderate cellular protection against yellow fever virus (YFV)-infected Vero cells without causing significant cytotoxicity. Shows a weak hemolytic activity, and is not cytotoxic to monocytes. Frenatin 2.3S (version without Gly-71) shows no or very weak antibacterial activity, shows no or very weak cytotoxicity to lung adenocarcinoma A549 cells and shows very weak hemolysis. It only stimulates production of pro-inflammatory cytokines IL-23 (but not IL-1beta and TNF-alpha) by mouse peritoneal macrophages and has no effect on the production of the anti-inflammatory cytokine IL-10. Frenatin 2.3S (version without Gly-71) very weakly stimulates insulin release. This is Frenatin 2.3S from Sphaenorhynchus lacteus (Orinoco lime treefrog).